The following is a 191-amino-acid chain: Zinc finger protein GIS2 (191 aa).

The C2H2-type zinc finger occupies 55 to 77 (FKCHYCFRNFPTSQALGGHQNAH).

In terms of tissue distribution, expressed in inflorescence meristems, floral meristems and stem epidermis.

Its subcellular location is the nucleus. Functionally, probable transcription factor required for the initiation of inflorescence trichomes in response to gibberellin and cytokinin. Is not involved in the regulation of trichome branching. Is functionally equivalent to ZFP8. The protein is Zinc finger protein GIS2 (GIS2) of Arabidopsis thaliana (Mouse-ear cress).